Consider the following 415-residue polypeptide: MTISTLLLSPNRRLLTCLSRVPSPWLLHSSHPAPGPPGALPNCFGHHCTKRVLLSDGFRRTLCVQATLKDHTEGLSDKEQRFVDRLYTGLVKGQRACLAEAITLVESTHTRKRELAQVLLQRVLALQREQELRNQGKPLTFRVGLSGPPGAGKSTFIECFGKMLTEQGHRLSVLAVDPSSCTSGGSLLGDKTRMIELSRDMNAYIRPSPTSGTLGGVTRTTNEAIVLCEGGGYDIILIETVGVGQSEFAVADMVDMFVLLLPPAGGDELQGIKRGIIEMADLVVITKSDGDLIVPARRIQAEYVSALKLLRRRSEVWRPKVIRISARSGEGITEMWDTMREFQHQMLASGELAAKRQTQHKVWMWNLIQENVLEHFKTHPSIREQIPLMERKVLSGALSPGRAADLLLKAFKSRH.

Residues 1–62 (MTISTLLLSP…LLSDGFRRTL (62 aa)) constitute a mitochondrion transit peptide. GTP contacts are provided by residues 147-155 (GPPGAGKST), Asp-289, and 325-327 (SAR).

This sequence belongs to the SIMIBI class G3E GTPase family. ArgK/MeaB subfamily. As to quaternary structure, homodimer. Interacts with MMUT (the apoenzyme form); the interaction is GTP dependent.

It localises to the mitochondrion. The protein resides in the cytoplasm. It carries out the reaction GTP + H2O = GDP + phosphate + H(+). GTPase activity is stimulated by MMUT. In terms of biological role, GTPase, binds and hydrolyzes GTP. Involved in intracellular vitamin B12 metabolism, mediates the transport of cobalamin (Cbl) into mitochondria for the final steps of adenosylcobalamin (AdoCbl) synthesis. Functions as a G-protein chaperone that assists AdoCbl cofactor delivery from MMAB to the methylmalonyl-CoA mutase (MMUT). Plays a dual role as both a protectase and a reactivase for MMUT. Protects MMUT from progressive inactivation by oxidation by decreasing the rate of the formation of the oxidized inactive cofactor hydroxocobalamin (OH2Cbl). Additionally acts a reactivase by promoting the replacement of OH2Cbl by the active cofactor AdoCbl, restoring the activity of MMUT in the presence and hydrolysis of GTP. The polypeptide is Methylmalonic aciduria type A homolog, mitochondrial (Mus musculus (Mouse)).